The primary structure comprises 183 residues: ATP synthase subunit b, chloroplastic (183 aa).

A helical membrane pass occupies residues 20–42 (INTNVFETNIINLAIVVGTLFYY).

It belongs to the ATPase B chain family. F-type ATPases have 2 components, F(1) - the catalytic core - and F(0) - the membrane proton channel. F(1) has five subunits: alpha(3), beta(3), gamma(1), delta(1), epsilon(1). F(0) has four main subunits: a(1), b(1), b'(1) and c(10-14). The alpha and beta chains form an alternating ring which encloses part of the gamma chain. F(1) is attached to F(0) by a central stalk formed by the gamma and epsilon chains, while a peripheral stalk is formed by the delta, b and b' chains.

The protein resides in the plastid. The protein localises to the chloroplast thylakoid membrane. Its function is as follows. F(1)F(0) ATP synthase produces ATP from ADP in the presence of a proton or sodium gradient. F-type ATPases consist of two structural domains, F(1) containing the extramembraneous catalytic core and F(0) containing the membrane proton channel, linked together by a central stalk and a peripheral stalk. During catalysis, ATP synthesis in the catalytic domain of F(1) is coupled via a rotary mechanism of the central stalk subunits to proton translocation. Functionally, component of the F(0) channel, it forms part of the peripheral stalk, linking F(1) to F(0). This Euglena gracilis protein is ATP synthase subunit b, chloroplastic.